A 37-amino-acid chain; its full sequence is Photosystem II reaction center protein M (37 aa).

Residues 7-27 (GFIAVLMFLAIPTAFLLIPYV) traverse the membrane as a helical segment.

The protein belongs to the PsbM family. In terms of assembly, PSII is composed of 1 copy each of membrane proteins PsbA, PsbB, PsbC, PsbD, PsbE, PsbF, PsbH, PsbI, PsbJ, PsbK, PsbL, PsbM, PsbT, PsbX, PsbY, PsbZ, Psb30/Ycf12, at least 3 peripheral proteins of the oxygen-evolving complex and a large number of cofactors. It forms dimeric complexes.

The protein localises to the plastid. It is found in the chloroplast thylakoid membrane. Its function is as follows. One of the components of the core complex of photosystem II (PSII). PSII is a light-driven water:plastoquinone oxidoreductase that uses light energy to abstract electrons from H(2)O, generating O(2) and a proton gradient subsequently used for ATP formation. It consists of a core antenna complex that captures photons, and an electron transfer chain that converts photonic excitation into a charge separation. This subunit is found at the monomer-monomer interface. This Pinus koraiensis (Korean pine) protein is Photosystem II reaction center protein M.